The primary structure comprises 134 residues: MAAQSDKDVKYYTLEEIKKHNHSKSTWLILHHKVYDLTKFLEEHPGGEEVLREQAGGDATENFEDVGHSTDARELSKTFIIGELHPDDRSKLSKPMETLITTVDSNSSWWTNWVIPAISALIVALMYRLYMADD.

Position 2 is an N-acetylalanine (Ala-2). Lys-7, Lys-10, and Lys-19 each carry N6-acetyllysine. The Cytochrome b5 heme-binding domain maps to 9–85 (VKYYTLEEIK…SKTFIIGELH (77 aa)). The heme site is built by His-44 and His-68. Residues 109–131 (WWTNWVIPAISALIVALMYRLYM) form a helical membrane-spanning segment.

Belongs to the cytochrome b5 family.

It is found in the endoplasmic reticulum membrane. Its subcellular location is the microsome membrane. Its function is as follows. Cytochrome b5 is a membrane-bound hemoprotein functioning as an electron carrier for several membrane-bound oxygenases. This chain is Cytochrome b5 (CYB5A), found in Oryctolagus cuniculus (Rabbit).